A 395-amino-acid chain; its full sequence is Guanine nucleotide-binding protein subunit beta-5 (395 aa).

WD repeat units lie at residues 103–142 (GHGNKVLCMDWCKDKRRIVSSSQDGKVIVWDSFTTNKEHA), 145–184 (MPCTWVMACAYAPSGCAIACGGLDNKCSVYPLTFDKNENM), 193–234 (MHTN…QSFH), 236–278 (HGAD…QAFE), 279–318 (THESDINSVRYYPSGDAFASGSDDATCRLYDLRADREVAI), 320–362 (SKES…RVSI), and 365–394 (GHENRVSTLRVSPDGTAFCSGSWDHTLRVW).

Belongs to the WD repeat G protein beta family. Component of a complex composed of RGS9 (isoform RGS9-1), GNB5 and RGS9BP; within this complex, the presence of GNB5 stabilizes both itself and RGS9 and increases RGS9 GTPase-activating protein (GAP) activity. Interacts with RGS7, forming the RGS7-GNB5 complex; within this complex, the presence of GNB5 increases RGS7 GTPase-activating protein (GAP) activity. Interacts with GPR158; promotes the GTPase activator activity of the RGS7-GNB5 complex in absence of glycine, in contrast GTPase activator activity of the RGS7-GNB5 complex is inhibited in presence of glycine. Interacts with RGS6. Widely expressed.

The protein resides in the membrane. Its function is as follows. Enhances GTPase-activating protein (GAP) activity of regulator of G protein signaling (RGS) proteins, such as RGS7 and RGS9, hence involved in the termination of the signaling initiated by the G protein coupled receptors (GPCRs) by accelerating the GTP hydrolysis on the G-alpha subunits, thereby promoting their inactivation. Increases RGS7 GTPase-activating protein (GAP) activity, thereby regulating mood and cognition. Increases RGS9 GTPase-activating protein (GAP) activity, hence contributes to the deactivation of G protein signaling initiated by D(2) dopamine receptors. May play an important role in neuronal signaling, including in the parasympathetic, but not sympathetic, control of heart rate. The protein is Guanine nucleotide-binding protein subunit beta-5 (GNB5) of Homo sapiens (Human).